Here is a 926-residue protein sequence, read N- to C-terminus: Alpha-aminoadipic semialdehyde synthase, mitochondrial (926 aa).

The N-terminal 27 residues, 1-27 (MLRAQRLRLARLRACVSRGLHHKPVMA), are a transit peptide targeting the mitochondrion. The tract at residues 28–455 (LRREDVNAWE…DAVITSNGLL (428 aa)) is lysine-ketoglutarate reductase. N6-acetyllysine occurs at positions 48, 52, and 56. An N6-acetyllysine; alternate modification is found at K93. The residue at position 93 (K93) is an N6-succinyllysine; alternate. K128 is subject to N6-acetyllysine. Residue K138 is modified to N6-acetyllysine; alternate. K138 carries the post-translational modification N6-succinyllysine; alternate. An N6-succinyllysine modification is found at K274. At K286 the chain carries N6-acetyllysine; alternate. K286 carries the post-translational modification N6-succinyllysine; alternate. K333 is modified (N6-succinyllysine). K458 carries the N6-acetyllysine; alternate modification. K458 carries the N6-succinyllysine; alternate modification. Residues 477–926 (MSTKKKVLVL…VFNTQSTIKL (450 aa)) are saccharopine dehydrogenase. NAD(+) contacts are provided by S488, D512, and Q516. Residues K523 and K535 each carry the N6-acetyllysine; alternate modification. N6-succinyllysine; alternate is present on residues K523 and K535. Positions 554, 576, and 577 each coordinate NAD(+). 577 to 578 (SY) is an L-saccharopine binding site. Position 584 is an N6-acetyllysine; alternate (K584). An N6-succinyllysine; alternate modification is found at K584. The NAD(+) site is built by L603, D604, and P605. An L-saccharopine-binding site is contributed by D604. Position 703 (R703) interacts with L-saccharopine. At K707 the chain carries N6-acetyllysine. An L-saccharopine-binding site is contributed by 724–726 (TLR). An N6-succinyllysine modification is found at K732. Residue K739 is modified to N6-acetyllysine. K761 carries the post-translational modification N6-acetyllysine; alternate. K761 carries the post-translational modification N6-succinyllysine; alternate. 2 positions are modified to N6-acetyllysine: K778 and K780.

In the N-terminal section; belongs to the AlaDH/PNT family. The protein in the C-terminal section; belongs to the saccharopine dehydrogenase family. As to quaternary structure, homotetramer.

The protein localises to the mitochondrion. The catalysed reaction is L-saccharopine + NADP(+) + H2O = L-lysine + 2-oxoglutarate + NADPH + H(+). It carries out the reaction L-saccharopine + NAD(+) + H2O = (S)-2-amino-6-oxohexanoate + L-glutamate + NADH + H(+). It participates in amino-acid degradation; L-lysine degradation via saccharopine pathway; glutaryl-CoA from L-lysine: step 1/6. The protein operates within amino-acid degradation; L-lysine degradation via saccharopine pathway; glutaryl-CoA from L-lysine: step 2/6. In terms of biological role, bifunctional enzyme that catalyzes the first two steps in lysine degradation. The chain is Alpha-aminoadipic semialdehyde synthase, mitochondrial from Rattus norvegicus (Rat).